The sequence spans 562 residues: 4-coumarate--CoA ligase-like 9 (562 aa).

6 residues coordinate ATP: Ser212, Ser213, Gly214, Thr215, Thr216, and Lys220. Residue Arg281 participates in CoA binding. The segment at 283-352 (ELEAMFKAVE…QKFPDVDIVQ (70 aa)) is SBD1. Gln352, Gly353, Thr357, Asp438, and Arg453 together coordinate ATP. Residues 353-417 (GYGLTESSGP…LRGPVIMKGY (65 aa)) are SBD2. CoA is bound by residues Lys461 and Ala462. Lys544 contacts ATP. The short motif at 560–562 (SKL) is the Microbody targeting signal element.

It belongs to the ATP-dependent AMP-binding enzyme family. Requires Mg(2+) as cofactor. Expressed at low level in leaves.

The protein localises to the peroxisome. The catalysed reaction is (9S,13S,15Z)-12-oxophyto-10,15-dienoate + ATP + CoA = (10Z,15Z)-12-oxophytodienoyl-CoA + AMP + diphosphate. It catalyses the reaction hexadecanoate + ATP + CoA = hexadecanoyl-CoA + AMP + diphosphate. The enzyme catalyses (9Z)-octadecenoate + ATP + CoA = (9Z)-octadecenoyl-CoA + AMP + diphosphate. It carries out the reaction octadecanoate + ATP + CoA = octadecanoyl-CoA + AMP + diphosphate. The catalysed reaction is tetradecanoate + ATP + CoA = tetradecanoyl-CoA + AMP + diphosphate. It catalyses the reaction dodecanoate + ATP + CoA = dodecanoyl-CoA + AMP + diphosphate. The enzyme catalyses decanoate + ATP + CoA = decanoyl-CoA + AMP + diphosphate. It carries out the reaction octanoate + ATP + CoA = octanoyl-CoA + AMP + diphosphate. The catalysed reaction is (9Z,12Z)-octadecadienoate + ATP + CoA = (9Z,12Z)-octadecadienoyl-CoA + AMP + diphosphate. It catalyses the reaction (9Z,12Z,15Z)-octadecatrienoate + ATP + CoA = (9Z,12Z,15Z)-octadecatrienoyl-CoA + AMP + diphosphate. The enzyme catalyses nonanoate + ATP + CoA = nonanoyl-CoA + AMP + diphosphate. Functionally, contributes to jasmonic acid biosynthesis by initiating the beta-oxidative chain shortening of its precursors. Converts 12-oxo-phytodienoic acid (OPDA) into OPDA-CoA. Follows a two-step reaction mechanism, wherein the carboxylate substrate first undergoes adenylation by ATP, followed by a thioesterification in the presence of CoA to yield the final CoA thioester. In Arabidopsis thaliana (Mouse-ear cress), this protein is 4-coumarate--CoA ligase-like 9.